The following is an 829-amino-acid chain: Protein SEY1 (829 aa).

Residues 1–721 are Cytoplasmic-facing; the sequence is MNQTPQIAQD…KRSMVSSVAQ (721 aa). Positions 87-310 constitute a GB1/RHD3-type G domain; sequence GFAYDVVAVF…REDYVFQPAY (224 aa). 97–104 contacts GTP; it reads GSQSTGKS. Residues 487 to 525 are a coiled coil; sequence EYEHELALLDEDLKLIADKCRADETKKMVNAIERNVKRQ. The chain crosses the membrane as a helical span at residues 722–742; sequence IPVWMYGVLVVLGWNEAMAVL. Over 743–745 the chain is Lumenal; sequence FNP. A helical membrane pass occupies residues 746–766; sequence LYFAMLLVLAASGYIILQLGL. Residues 767-829 lie on the Cytoplasmic side of the membrane; that stretch reads AGPILQIAST…DLIKGEMLEK (63 aa). Positions 806–829 are disordered; it reads PVTASSSDEQERKGDLIKGEMLEK. Residues 814-829 show a composition bias toward basic and acidic residues; sequence EQERKGDLIKGEMLEK.

Belongs to the TRAFAC class dynamin-like GTPase superfamily. GB1/RHD3 GTPase family. RHD3 subfamily.

The protein localises to the endoplasmic reticulum membrane. Its function is as follows. Cooperates with the reticulon proteins and tubule-shaping DP1 family proteins to generate and maintain the structure of the tubular endoplasmic reticulum network. Has GTPase activity, which is required for its function in ER organization. The sequence is that of Protein SEY1 from Cryptococcus neoformans var. neoformans serotype D (strain B-3501A) (Filobasidiella neoformans).